The primary structure comprises 418 residues: MSDLLDDLEWRGLVADSTDREALEAHLAQGPVTFYVGFDPTAKSLHIGHLVQLMLVRALQERGHKPLLLVGGATGLIGDPKMTGERHMNDREVVAEWVESIKDQVSKYVDTDGRNAAQIVNNYDWTVKYTALDLLRDVGKHFSVNRMLARDVVARRLESGISYTEFSYVLLQSLDFYELHKRYGCTLQTGAQDQWGNITAGAEFIRKTTGDVVHGLVTPLITKADGTKYGKTESGTVWVDPELTSAYAFHQFFLNAEDSKVIEYLKIFSPRSREEIEDLARKTEEEPWRRAAQHCLADDLTDLVHGVEQRKAAEAAAQAIFGRGELRDLDERTVLSLSDELGAAHHEGGEYPTVVGAMVAAGVVDTKSGGRRAVAEGGAYLNNVKVADPDQRLTDDDFLCGRVALVRRGKKTVGALTR.

Y35 provides a ligand contact to L-tyrosine. The 'HIGH' region signature appears at 40–49 (PTAKSLHIGH). Residues Y168 and Q172 each contribute to the L-tyrosine site. The 'KMSKS' region signature appears at 228–232 (KYGKT). K231 provides a ligand contact to ATP. The S4 RNA-binding domain occupies 352 to 410 (PTVVGAMVAAGVVDTKSGGRRAVAEGGAYLNNVKVADPDQRLTDDDFLCGRVALVRRGK).

This sequence belongs to the class-I aminoacyl-tRNA synthetase family. TyrS type 1 subfamily. As to quaternary structure, homodimer.

The protein localises to the cytoplasm. The enzyme catalyses tRNA(Tyr) + L-tyrosine + ATP = L-tyrosyl-tRNA(Tyr) + AMP + diphosphate + H(+). Catalyzes the attachment of tyrosine to tRNA(Tyr) in a two-step reaction: tyrosine is first activated by ATP to form Tyr-AMP and then transferred to the acceptor end of tRNA(Tyr). The chain is Tyrosine--tRNA ligase from Cutibacterium acnes (strain DSM 16379 / KPA171202) (Propionibacterium acnes).